Consider the following 276-residue polypeptide: MDFWTAFQAIILGVVEGLTEFLPISSTGHQIIVADLIGFGGERAMAFNIIIQLAAILAVVWEFRGKILEVVFGLTSQPKARRFTGNLLLAFMPAVVLGVLFADLIHEYLFNPITVATALVVGGVIMLWAERREHRVQVDHVDDMRWSHALKIGFVQCLAMIPGTSRSGSTIIGGLLFGLSRKAATEFSFFLAMPTMVGAAVYSGYKYRDLFQPADLPVFAIGFVTSFIFAMIAVRALLKFIANHSYAAFAWYRIVFGLLILATWQFGWVDWSTAHG.

Transmembrane regions (helical) follow at residues 43–63 (RAMAFNIIIQLAAILAVVWEF), 85–105 (GNLLLAFMPAVVLGVLFADLI), 109–129 (LFNPITVATALVVGGVIMLWA), 183–203 (AATEFSFFLAMPTMVGAAVYS), 214–234 (ADLPVFAIGFVTSFIFAMIAV), and 249–269 (FAWYRIVFGLLILATWQFGWV).

This sequence belongs to the UppP family.

It is found in the cell inner membrane. The enzyme catalyses di-trans,octa-cis-undecaprenyl diphosphate + H2O = di-trans,octa-cis-undecaprenyl phosphate + phosphate + H(+). Its function is as follows. Catalyzes the dephosphorylation of undecaprenyl diphosphate (UPP). Confers resistance to bacitracin. The protein is Undecaprenyl-diphosphatase of Pseudomonas putida (strain GB-1).